The chain runs to 280 residues: DegV domain-containing protein SPy_1698/M5005_Spy1391 (280 aa).

The 278-residue stretch at 3–280 folds into the DegV domain; sequence WKIVTDSGCD…DGGLLMGYEI (278 aa). Serine 63 and serine 91 together coordinate hexadecanoate.

In terms of biological role, may bind long-chain fatty acids, such as palmitate, and may play a role in lipid transport or fatty acid metabolism. The chain is DegV domain-containing protein SPy_1698/M5005_Spy1391 from Streptococcus pyogenes serotype M1.